Here is a 100-residue protein sequence, read N- to C-terminus: Small ribosomal subunit protein uS14c (100 aa).

Belongs to the universal ribosomal protein uS14 family. In terms of assembly, part of the 30S ribosomal subunit.

Its subcellular location is the plastid. The protein localises to the chloroplast. Binds 16S rRNA, required for the assembly of 30S particles. The protein is Small ribosomal subunit protein uS14c of Psilotum nudum (Whisk fern).